The sequence spans 1414 residues: DNA-directed RNA polymerase subunit beta' (1414 aa).

Zn(2+) contacts are provided by C70, C72, C85, and C88. 3 residues coordinate Mg(2+): D460, D462, and D464. Positions 814, 888, 895, and 898 each coordinate Zn(2+). Over residues E1392–A1403 the composition is skewed to low complexity. Residues E1392–E1414 are disordered.

The protein belongs to the RNA polymerase beta' chain family. The RNAP catalytic core consists of 2 alpha, 1 beta, 1 beta' and 1 omega subunit. When a sigma factor is associated with the core the holoenzyme is formed, which can initiate transcription. Mg(2+) serves as cofactor. It depends on Zn(2+) as a cofactor.

The enzyme catalyses RNA(n) + a ribonucleoside 5'-triphosphate = RNA(n+1) + diphosphate. Its function is as follows. DNA-dependent RNA polymerase catalyzes the transcription of DNA into RNA using the four ribonucleoside triphosphates as substrates. The polypeptide is DNA-directed RNA polymerase subunit beta' (Coxiella burnetii (strain Dugway 5J108-111)).